A 319-amino-acid chain; its full sequence is Olfactory receptor 8K1 (319 aa).

At 1–31 the chain is on the extracellular side; it reads MNHVVKHNHTAVTKVTEFILMGITDNPGLQA. N8 carries an N-linked (GlcNAc...) asparagine glycan. The helical transmembrane segment at 32 to 52 threads the bilayer; sequence PLFGLFLIIYLVTVIGNLGMV. Residues 53-60 lie on the Cytoplasmic side of the membrane; the sequence is ILTYLDSK. Residues 61-81 form a helical membrane-spanning segment; sequence LHTPMYFFLRHLSITDLGYST. Residues 82-105 are Extracellular-facing; it reads VIAPKMLVNFIVHKNTISYNWYAT. A helical transmembrane segment spans residues 106–126; that stretch reads QLAFFEIFIISELFILSAMAY. Residues 127-145 are Cytoplasmic-facing; that stretch reads DRYVAICKPLLYVIIMAEK. The chain crosses the membrane as a helical span at residues 146–166; sequence VLWVLVIVPYLYSTFVSLFLT. At 167 to 203 the chain is on the extracellular side; the sequence is IKLFKLSFCGSNIISYFYCDCIPLMSILCSDTNELEL. A helical membrane pass occupies residues 204–223; it reads IILIFSGCNLLFSLSIVLIS. Over 224-243 the chain is Cytoplasmic; sequence YMFILVAILRMNSRKGRYKA. The helical transmembrane segment at 244-264 threads the bilayer; that stretch reads FSTCSSHLTVVIMFYGTLLFI. Residues 265-277 are Extracellular-facing; that stretch reads YLQPKSSHTLAID. The helical transmembrane segment at 278–298 threads the bilayer; that stretch reads KMASVFYTLLIPMLNPLIYSL. Residues 299 to 319 lie on the Cytoplasmic side of the membrane; sequence RNKEVKDALKRTLTNRFKIPI.

Belongs to the G-protein coupled receptor 1 family.

It is found in the cell membrane. In terms of biological role, odorant receptor. This Homo sapiens (Human) protein is Olfactory receptor 8K1 (OR8K1).